The chain runs to 105 residues: Antitoxin YfjZ (105 aa).

Belongs to the CbeA/YafW/YfjZ antitoxin family.

Functionally, antitoxin component of a type IV toxin-antitoxin (TA) system. Antitoxin that counteracts the effect of cognate toxin YpjF. Also counteracts the effect of non-cognate toxins CbtA and YfkI. The polypeptide is Antitoxin YfjZ (yfjZ) (Escherichia coli (strain K12)).